The chain runs to 249 residues: Myelin protein P0 (249 aa).

The N-terminal stretch at 1–29 (MALGAIGDGRLLLLLVGLLSASGPSPTLA) is a signal peptide. The region spanning 30–143 (IHVYTPREVY…DIVGKSSQVT (114 aa)) is the Ig-like V-type domain. Over 30-153 (IHVYTPREVY…LYVLEKVPTR (124 aa)) the chain is Extracellular. A disulfide bond links Cys50 and Cys127. N-linked (GlcNAc...) asparagine glycosylation occurs at Asn122. A helical membrane pass occupies residues 154 to 179 (YGVVLGSIIGGVLLLVALLVAVVYLV). At 180–249 (RFCWLRRQAV…APGEARKDKK (70 aa)) the chain is on the cytoplasmic side. A disordered region spans residues 227-249 (RSAKAAAEKKSKGAPGEARKDKK).

It belongs to the myelin P0 protein family. Found only in peripheral nervous system Schwann cells.

It is found in the cell membrane. Functionally, is an adhesion molecule necessary for normal myelination in the peripheral nervous system. It mediates adhesion between adjacent myelin wraps and ultimately drives myelin compaction. The chain is Myelin protein P0 (MPZ) from Gallus gallus (Chicken).